The chain runs to 30 residues: Cyclotide hyen-F (30 aa).

Positions 1–30 (GLPCGESCVYIPCISTVLGCSCSNKVCYRN) form a cross-link, cyclopeptide (Gly-Asn). 3 disulfide bridges follow: Cys-4–Cys-20, Cys-8–Cys-22, and Cys-13–Cys-27.

In terms of processing, this is a cyclic peptide. In terms of tissue distribution, detected in seeds (at protein level).

Its function is as follows. Probably participates in a plant defense mechanism. This chain is Cyclotide hyen-F, found in Pigea enneasperma (Spade flower).